A 357-amino-acid chain; its full sequence is Phospho-N-acetylmuramoyl-pentapeptide-transferase (357 aa).

10 helical membrane passes run 23–43 (AIFS…YFIY), 70–90 (TMGG…YCNL), 91–111 (SNIY…IGFI), 127–147 (LKWK…MIKI), 171–191 (YLYV…VNLT), 196–216 (GLAI…SLFS), 236–256 (LAIL…FNSY), 260–280 (VFMG…IAIL), 286–306 (LLII…LQII), and 334–354 (LIIV…LISL).

This sequence belongs to the glycosyltransferase 4 family. MraY subfamily. The cofactor is Mg(2+).

It localises to the cell inner membrane. It carries out the reaction UDP-N-acetyl-alpha-D-muramoyl-L-alanyl-gamma-D-glutamyl-meso-2,6-diaminopimeloyl-D-alanyl-D-alanine + di-trans,octa-cis-undecaprenyl phosphate = di-trans,octa-cis-undecaprenyl diphospho-N-acetyl-alpha-D-muramoyl-L-alanyl-D-glutamyl-meso-2,6-diaminopimeloyl-D-alanyl-D-alanine + UMP. It participates in cell wall biogenesis; peptidoglycan biosynthesis. Its function is as follows. Catalyzes the initial step of the lipid cycle reactions in the biosynthesis of the cell wall peptidoglycan: transfers peptidoglycan precursor phospho-MurNAc-pentapeptide from UDP-MurNAc-pentapeptide onto the lipid carrier undecaprenyl phosphate, yielding undecaprenyl-pyrophosphoryl-MurNAc-pentapeptide, known as lipid I. In Buchnera aphidicola subsp. Acyrthosiphon pisum (strain Tuc7), this protein is Phospho-N-acetylmuramoyl-pentapeptide-transferase.